We begin with the raw amino-acid sequence, 142 residues long: HTH-type transcriptional regulator MntR (142 aa).

Residues 1-63 (MPTPSMEDYI…YEKYRGLILT (63 aa)) enclose the HTH dtxR-type domain. Positions 8, 11, 77, 99, 102, and 103 each coordinate Mn(2+).

The protein belongs to the DtxR/MntR family. Homodimer.

It localises to the cytoplasm. Its activity is regulated as follows. DNA binding is strongly activated by Mn(2+). Functionally, central regulator of manganese homeostasis. The sequence is that of HTH-type transcriptional regulator MntR from Listeria monocytogenes serotype 4b (strain F2365).